Consider the following 160-residue polypeptide: Transcription antitermination protein NusB (160 aa).

This sequence belongs to the NusB family.

Its function is as follows. Involved in transcription antitermination. Required for transcription of ribosomal RNA (rRNA) genes. Binds specifically to the boxA antiterminator sequence of the ribosomal RNA (rrn) operons. The polypeptide is Transcription antitermination protein NusB (Mycolicibacterium smegmatis (strain ATCC 700084 / mc(2)155) (Mycobacterium smegmatis)).